A 263-amino-acid polypeptide reads, in one-letter code: Tryptophan synthase alpha chain (263 aa).

Active-site proton acceptor residues include Glu-50 and Asp-61.

This sequence belongs to the TrpA family. Tetramer of two alpha and two beta chains.

The enzyme catalyses (1S,2R)-1-C-(indol-3-yl)glycerol 3-phosphate + L-serine = D-glyceraldehyde 3-phosphate + L-tryptophan + H2O. It participates in amino-acid biosynthesis; L-tryptophan biosynthesis; L-tryptophan from chorismate: step 5/5. The alpha subunit is responsible for the aldol cleavage of indoleglycerol phosphate to indole and glyceraldehyde 3-phosphate. The sequence is that of Tryptophan synthase alpha chain from Clostridium acetobutylicum (strain ATCC 824 / DSM 792 / JCM 1419 / IAM 19013 / LMG 5710 / NBRC 13948 / NRRL B-527 / VKM B-1787 / 2291 / W).